Reading from the N-terminus, the 164-residue chain is MMSLLTGTGLRWMWLAVFAIVLDQAAKLAIMQHIPYGHGVVITPFFNLVHVYNTGAAFSFLADAEGWQRWLFSGLAIVISGVLAVAMAKAPAKCSLSNLAYSLVIGGAIGNLIDRVVYGHVVDFLDFHWQDLYHFAAFNVADMAISCGAVFIILDGFIKKPADK.

Transmembrane regions (helical) follow at residues 2–22, 40–60, 70–90, and 99–119; these read MSLLTGTGLRWMWLAVFAIVL, VVITPFFNLVHVYNTGAAFSF, WLFSGLAIVISGVLAVAMAKA, and LAYSLVIGGAIGNLIDRVVYG. Residues D123 and D142 contribute to the active site. Residues 138-158 form a helical membrane-spanning segment; that stretch reads FNVADMAISCGAVFIILDGFI.

Belongs to the peptidase A8 family.

The protein resides in the cell inner membrane. The catalysed reaction is Release of signal peptides from bacterial membrane prolipoproteins. Hydrolyzes -Xaa-Yaa-Zaa-|-(S,diacylglyceryl)Cys-, in which Xaa is hydrophobic (preferably Leu), and Yaa (Ala or Ser) and Zaa (Gly or Ala) have small, neutral side chains.. Its pathway is protein modification; lipoprotein biosynthesis (signal peptide cleavage). This protein specifically catalyzes the removal of signal peptides from prolipoproteins. The sequence is that of Lipoprotein signal peptidase from Tolumonas auensis (strain DSM 9187 / NBRC 110442 / TA 4).